The sequence spans 269 residues: Hydroxyethylthiazole kinase (269 aa).

Methionine 48 contributes to the substrate binding site. ATP contacts are provided by lysine 124 and threonine 170. Glycine 197 is a binding site for substrate.

The protein belongs to the Thz kinase family. Mg(2+) is required as a cofactor.

The catalysed reaction is 5-(2-hydroxyethyl)-4-methylthiazole + ATP = 4-methyl-5-(2-phosphooxyethyl)-thiazole + ADP + H(+). Its pathway is cofactor biosynthesis; thiamine diphosphate biosynthesis; 4-methyl-5-(2-phosphoethyl)-thiazole from 5-(2-hydroxyethyl)-4-methylthiazole: step 1/1. Functionally, catalyzes the phosphorylation of the hydroxyl group of 4-methyl-5-beta-hydroxyethylthiazole (THZ). The chain is Hydroxyethylthiazole kinase from Clostridium kluyveri (strain NBRC 12016).